Reading from the N-terminus, the 968-residue chain is Alanine--tRNA ligase, cytoplasmic (968 aa).

Position 1 is an N-acetylmethionine (Met-1). Ser-3 is subject to Phosphoserine. Position 19 is an N6-acetyllysine (Lys-19). Residues Arg-77, His-95, Trp-176, and 214 to 216 each bind ATP; that span reads IWN. L-alanine contacts are provided by Asn-216 and Asp-239. Gly-243 contributes to the ATP binding site. Phosphoserine is present on residues Ser-399 and Ser-555. Residues His-605, His-609, Cys-723, and His-727 each contribute to the Zn(2+) site. The Nuclear localization signal motif lies at 750-763; it reads RRIVAVTGAEAQKA. At Lys-876 the chain carries N6-acetyllysine. N6,N6,N6-trimethyllysine; alternate is present on Lys-943. The residue at position 943 (Lys-943) is an N6,N6-dimethyllysine; alternate. Lys-943 is modified (N6-methyllysine; alternate).

The protein belongs to the class-II aminoacyl-tRNA synthetase family. As to quaternary structure, monomer. Interacts with ANKRD16; the interaction is direct. It depends on Zn(2+) as a cofactor. Post-translationally, ISGylated. In terms of processing, methylation at 'Lys-943' by METTL21C.

Its subcellular location is the cytoplasm. It localises to the nucleus. It carries out the reaction tRNA(Ala) + L-alanine + ATP = L-alanyl-tRNA(Ala) + AMP + diphosphate. The enzyme catalyses (S)-lactate + ATP + H(+) = (S)-lactoyl-AMP + diphosphate. The catalysed reaction is (S)-lactoyl-AMP + L-lysyl-[protein] = N(6)-[(S)-lactoyl]-L-lysyl-[protein] + AMP + 2 H(+). The protein lactyltransferase activity is inhibited by beta-alanine. In terms of biological role, catalyzes the attachment of alanine to tRNA(Ala) in a two-step reaction: alanine is first activated by ATP to form Ala-AMP and then transferred to the acceptor end of tRNA(Ala). Also edits incorrectly charged tRNA(Ala) via its editing domain. In presence of high levels of lactate, also acts as a protein lactyltransferase that mediates lactylation of lysine residues in target proteins, such as TEAD1, TP53/p53 and YAP1. Protein lactylation takes place in a two-step reaction: lactate is first activated by ATP to form lactate-AMP and then transferred to lysine residues of target proteins. Acts as an inhibitor of TP53/p53 activity by catalyzing lactylation of TP53/p53. Acts as a positive regulator of the Hippo pathway by mediating lactylation of TEAD1 and YAP1. This Rattus norvegicus (Rat) protein is Alanine--tRNA ligase, cytoplasmic (Aars1).